A 352-amino-acid chain; its full sequence is Anthranilate phosphoribosyltransferase (352 aa).

5-phospho-alpha-D-ribose 1-diphosphate-binding positions include Gly94, 97–98 (GS), Ser102, 104–107 (NIST), 122–130 (KHGNRAVSS), and Ser134. Gly94 is an anthranilate binding site. Residue Ser106 coordinates Mg(2+). Asn125 is a binding site for anthranilate. An anthranilate-binding site is contributed by Arg180. Asp239 and Glu240 together coordinate Mg(2+).

It belongs to the anthranilate phosphoribosyltransferase family. Homodimer. It depends on Mg(2+) as a cofactor.

The enzyme catalyses N-(5-phospho-beta-D-ribosyl)anthranilate + diphosphate = 5-phospho-alpha-D-ribose 1-diphosphate + anthranilate. It functions in the pathway amino-acid biosynthesis; L-tryptophan biosynthesis; L-tryptophan from chorismate: step 2/5. Catalyzes the transfer of the phosphoribosyl group of 5-phosphorylribose-1-pyrophosphate (PRPP) to anthranilate to yield N-(5'-phosphoribosyl)-anthranilate (PRA). The polypeptide is Anthranilate phosphoribosyltransferase (Citrifermentans bemidjiense (strain ATCC BAA-1014 / DSM 16622 / JCM 12645 / Bem) (Geobacter bemidjiensis)).